Consider the following 352-residue polypeptide: NADH-ubiquinone oxidoreductase chain 2 (352 aa).

Transmembrane regions (helical) follow at residues Met4–Glu24, Trp26–Phe46, Phe60–Phe80, Leu96–Pro116, Phe124–Tyr144, Phe150–Leu170, Ile178–Leu198, Leu205–Phe225, Ile241–Ile261, Gly274–Leu294, and Leu330–Ile350.

It belongs to the complex I subunit 2 family.

Its subcellular location is the mitochondrion inner membrane. The catalysed reaction is a ubiquinone + NADH + 5 H(+)(in) = a ubiquinol + NAD(+) + 4 H(+)(out). Its function is as follows. Core subunit of the mitochondrial membrane respiratory chain NADH dehydrogenase (Complex I) that is believed to belong to the minimal assembly required for catalysis. Complex I functions in the transfer of electrons from NADH to the respiratory chain. The immediate electron acceptor for the enzyme is believed to be ubiquinone. This chain is NADH-ubiquinone oxidoreductase chain 2 (ND2), found in Paracentrotus lividus (Common sea urchin).